The following is a 555-amino-acid chain: Phosphoglucomutase (555 aa).

2 residues coordinate alpha-D-glucose 1,6-bisphosphate: Arg-22 and Ser-114. The active-site Phosphoserine intermediate is Ser-114. 4 residues coordinate Mg(2+): Ser-114, Asp-279, Asp-281, and Asp-283. Ser-114 is modified (phosphoserine). Alpha-D-glucose 1,6-bisphosphate is bound by residues Asp-283, Arg-284, Thr-347, Glu-366, Ser-368, and Lys-379.

This sequence belongs to the phosphohexose mutase family. As to quaternary structure, monomer. It depends on Mg(2+) as a cofactor.

It localises to the cytoplasm. The enzyme catalyses alpha-D-glucose 1-phosphate = alpha-D-glucose 6-phosphate. The catalysed reaction is O-phospho-L-seryl-[protein] + alpha-D-glucose 1-phosphate = alpha-D-glucose 1,6-bisphosphate + L-seryl-[protein]. It catalyses the reaction alpha-D-glucose 1,6-bisphosphate + L-seryl-[protein] = O-phospho-L-seryl-[protein] + alpha-D-glucose 6-phosphate. In terms of biological role, catalyzes the reversible isomerization of alpha-D-glucose 1-phosphate to alpha-D-glucose 6-phosphate. The mechanism proceeds via the intermediate compound alpha-D-glucose 1,6-bisphosphate. Key enzyme in hexose metabolism. The reverse reaction is an essential step for biosynthesis because glucose 1-phosphate is the starting point for the synthesis of UDP-glucose, which acts as a precursor for the synthesis of oligosaccharides and trehalose. The protein is Phosphoglucomutase (pgmA) of Aspergillus fumigatus (strain ATCC MYA-4609 / CBS 101355 / FGSC A1100 / Af293) (Neosartorya fumigata).